The chain runs to 303 residues: Probable 5-dehydro-4-deoxyglucarate dehydratase (303 aa).

This sequence belongs to the DapA family.

The catalysed reaction is 5-dehydro-4-deoxy-D-glucarate + H(+) = 2,5-dioxopentanoate + CO2 + H2O. The protein operates within carbohydrate acid metabolism; D-glucarate degradation; 2,5-dioxopentanoate from D-glucarate: step 2/2. The polypeptide is Probable 5-dehydro-4-deoxyglucarate dehydratase (Acidovorax ebreus (strain TPSY) (Diaphorobacter sp. (strain TPSY))).